Consider the following 952-residue polypeptide: Meiosis-specific coiled-coil domain-containing protein MEIOC (952 aa).

3 disordered regions span residues 1 to 23 (MEVR…EGLE), 609 to 629 (QAKP…LDGL), and 933 to 952 (VHES…TNKH). The segment covering 617–627 (YDPEEGPKHLD) has biased composition (basic and acidic residues). Residues 936–952 (SINSSNPMNQRGETNKH) are compositionally biased toward polar residues.

In terms of assembly, interacts with YTHDC2; binds transcript that regulate the mitotic cell cycle inhibiting progression into metaphase, thereby allowing meiotic prophase to proceed normally. Interacts with RBM46. Expressed in fetal ovaries. Expressed in testis.

It is found in the cytoplasm. The protein resides in the nucleus. Is required for meiosis completion in both male and female germ cells. Confers stability to numerous meiotic mRNAs in gonads allowing proper initiation and progression into meiosis prophase I. The function may involve YTHDC2 and is independent of induction by retinoic acid (RA). Maintains an extended meiotic prophase I by properly promoting the transition from a mitotic to a meiotic cell cycle program by binding transcripts through its interaction with YTHDC2 that regulate the mitotic cell cycle. The chain is Meiosis-specific coiled-coil domain-containing protein MEIOC from Homo sapiens (Human).